The sequence spans 159 residues: S-ribosylhomocysteine lyase (159 aa).

3 residues coordinate Fe cation: histidine 53, histidine 57, and cysteine 124.

The protein belongs to the LuxS family. As to quaternary structure, homodimer. The cofactor is Fe cation.

The catalysed reaction is S-(5-deoxy-D-ribos-5-yl)-L-homocysteine = (S)-4,5-dihydroxypentane-2,3-dione + L-homocysteine. In terms of biological role, involved in the synthesis of autoinducer 2 (AI-2) which is secreted by bacteria and is used to communicate both the cell density and the metabolic potential of the environment. The regulation of gene expression in response to changes in cell density is called quorum sensing. Catalyzes the transformation of S-ribosylhomocysteine (RHC) to homocysteine (HC) and 4,5-dihydroxy-2,3-pentadione (DPD). The polypeptide is S-ribosylhomocysteine lyase (Desulfotalea psychrophila (strain LSv54 / DSM 12343)).